We begin with the raw amino-acid sequence, 362 residues long: tRNA N6-adenosine threonylcarbamoyltransferase (362 aa).

Fe cation contacts are provided by His120 and His124. Substrate contacts are provided by residues 142-146 (LASGG), Asp175, Gly188, and Asn288. Residue Asp316 participates in Fe cation binding. Basic and acidic residues predominate over residues 342-351 (RPRWPLDPDA). The interval 342–362 (RPRWPLDPDAPKAAGAGGVKA) is disordered.

Belongs to the KAE1 / TsaD family. Fe(2+) is required as a cofactor.

It is found in the cytoplasm. It catalyses the reaction L-threonylcarbamoyladenylate + adenosine(37) in tRNA = N(6)-L-threonylcarbamoyladenosine(37) in tRNA + AMP + H(+). Its function is as follows. Required for the formation of a threonylcarbamoyl group on adenosine at position 37 (t(6)A37) in tRNAs that read codons beginning with adenine. Is involved in the transfer of the threonylcarbamoyl moiety of threonylcarbamoyl-AMP (TC-AMP) to the N6 group of A37, together with TsaE and TsaB. TsaD likely plays a direct catalytic role in this reaction. The chain is tRNA N6-adenosine threonylcarbamoyltransferase from Rhodospirillum rubrum (strain ATCC 11170 / ATH 1.1.1 / DSM 467 / LMG 4362 / NCIMB 8255 / S1).